The chain runs to 308 residues: Aspartate carbamoyltransferase catalytic subunit (308 aa).

Residues arginine 59 and threonine 60 each coordinate carbamoyl phosphate. Lysine 87 contacts L-aspartate. 3 residues coordinate carbamoyl phosphate: arginine 109, histidine 139, and glutamine 142. The L-aspartate site is built by arginine 172 and arginine 224. Carbamoyl phosphate-binding residues include alanine 265 and proline 266.

It belongs to the aspartate/ornithine carbamoyltransferase superfamily. ATCase family. Heterododecamer (2C3:3R2) of six catalytic PyrB chains organized as two trimers (C3), and six regulatory PyrI chains organized as three dimers (R2).

It carries out the reaction carbamoyl phosphate + L-aspartate = N-carbamoyl-L-aspartate + phosphate + H(+). It functions in the pathway pyrimidine metabolism; UMP biosynthesis via de novo pathway; (S)-dihydroorotate from bicarbonate: step 2/3. Catalyzes the condensation of carbamoyl phosphate and aspartate to form carbamoyl aspartate and inorganic phosphate, the committed step in the de novo pyrimidine nucleotide biosynthesis pathway. The protein is Aspartate carbamoyltransferase catalytic subunit of Streptococcus thermophilus (strain ATCC BAA-491 / LMD-9).